We begin with the raw amino-acid sequence, 547 residues long: Cdc42-interacting protein 4 (547 aa).

Residues 1-117 (MDWGTELWDQ…EMKQERKMHF (117 aa)) are required for translocation to the plasma membrane in response to insulin, podosome formation and interaction with AKAP9 and microtubules. The 264-residue stretch at 1-264 (MDWGTELWDQ…AAESVDAKND (264 aa)) folds into the F-BAR domain. Residues 67 to 259 (FSQQQSFVQL…EGMKVAAESV (193 aa)) adopt a coiled-coil conformation. Positions 293-483 (RVPSDSSLGT…YTEFDEDFEE (191 aa)) are interaction with CDC42. The interval 293-547 (RVPSDSSLGT…PTSYLRVTLN (255 aa)) is interaction with PDE6G. The interval 294–323 (VPSDSSLGTPDGRPELRAASSRSRAKRWPF) is disordered. A phosphoserine mark is found at Ser-296, Ser-298, and Ser-299. Residues 332–425 (TEDFSHLPPE…ESRVLSNRGD (94 aa)) adopt a coiled-coil conformation. The region spanning 337-414 (HLPPEQQRKR…VQKYEAWLAE (78 aa)) is the REM-1 domain. The tract at residues 415–547 (AESRVLSNRG…PTSYLRVTLN (133 aa)) is required for interaction with FASLG and localization to lysosomes. Residues 420–485 (LSNRGDSLSR…EFDEDFEEPA (66 aa)) are disordered. Ser-426 is subject to Phosphoserine. An interaction with DNM2 and WASL region spans residues 431-487 (TRPPDPPTTAPPDSSSSSNNSGSQDNKESSEEPPSEEGQDTPIYTEFDEDFEEPASP). Residues 441-451 (PPDSSSSSNNS) are compositionally biased toward low complexity. The interaction with DNM1 and WASL stretch occupies residues 476-547 (EFDEDFEEPA…PTSYLRVTLN (72 aa)). The segment at 484–547 (PASPIGQCVA…PTSYLRVTLN (64 aa)) is required for podosome formation. The region spanning 486-547 (SPIGQCVAIY…PTSYLRVTLN (62 aa)) is the SH3 domain. The interval 490 to 547 (QCVAIYHFEGSSEGTVSMSEGEDLSLMEEDKGDGWTRVRRKQGGEGYVPTSYLRVTLN) is interaction with WAS. Positions 492–547 (VAIYHFEGSSEGTVSMSEGEDLSLMEEDKGDGWTRVRRKQGGEGYVPTSYLRVTLN) are interaction with ARHGAP17, DAAM1, DIAPH1 and DIAPH2.

It belongs to the FNBP1 family. In terms of assembly, homodimerizes, the dimers can polymerize end-to-end to form filamentous structures. Interacts specifically with GTP-bound CDC42 and RHOQ. Interacts with AKAP9, ARHGAP17, DAAM1, DIAPH1, DIAPH2, DNM1, DNM2, FASLG/FASL, GAPVD1, LYN, microtubules, SRC, WAS/WASP and WASL/N-WASP. Interacts with the ligand binding domain of the thyroid receptor (TR) in the presence of thyroid hormone. May interact with CTNNB1 and HD/HTT. Interacts with PDE6G. In terms of tissue distribution, expressed in adrenal gland, aorta, brain, heart, kidney, liver, skeletal muscle and spleen.

The protein resides in the cytoplasm. Its subcellular location is the cytoskeleton. The protein localises to the cell cortex. It localises to the lysosome. It is found in the golgi apparatus. The protein resides in the cell membrane. Its subcellular location is the cell projection. The protein localises to the phagocytic cup. Functionally, required to coordinate membrane tubulation with reorganization of the actin cytoskeleton during endocytosis. Also acts as a link between CDC42 signaling and regulation of the actin cytoskeleton. Binds to lipids such as phosphatidylinositol 4,5-bisphosphate and phosphatidylserine and promotes membrane invagination and the formation of tubules. Also enhances actin polymerization in the vicinity of membrane tubules by recruiting WASL/N-WASP which in turn activates the Arp2/3 complex. Actin polymerization and dynamin may promote the fission of membrane tubules to form endocytic vesicles. Required for the formation of podosomes, actin-rich adhesion structures specific to monocyte-derived cells. Required for translocation of GLUT4 to the plasma membrane in response to insulin signaling. May be required for the lysosomal retention of FASLG/FASL. The sequence is that of Cdc42-interacting protein 4 (Trip10) from Rattus norvegicus (Rat).